The primary structure comprises 590 residues: Sulfoacetaldehyde acetyltransferase (590 aa).

Belongs to the TPP enzyme family. Mg(2+) serves as cofactor. Requires thiamine diphosphate as cofactor.

It is found in the cytoplasm. The catalysed reaction is acetyl phosphate + sulfite + H(+) = sulfoacetaldehyde + phosphate. It participates in organosulfur degradation; taurine degradation via aerobic pathway; acetyl phosphate and sulfite from taurine: step 2/2. This chain is Sulfoacetaldehyde acetyltransferase, found in Rhodobacter capsulatus (strain ATCC BAA-309 / NBRC 16581 / SB1003).